Here is a 622-residue protein sequence, read N- to C-terminus: Low affinity potassium transport system protein Kup (622 aa).

The next 12 membrane-spanning stretches (helical) occupy residues 12–32 (ITLAAIGVVYGDIGTSPLYTL), 49–69 (VFGFLSLIFWLLIFVVSIKYL), 103–123 (VIMGLIGGSFFYGEVVITPAI), 137–157 (PQLDTWIVPLSIIVLTLLFMI), 165–185 (VGKLFAPIMLTWFLILAVLGL), 213–233 (VSFIALGAVVLSITGVEALYA), 247–267 (WFTVVLPSLVLNYFGQGALLL), 276–296 (PFFLLAPDWALIPLLILAALA), 337–357 (IYIPFVNWLLYFAVVVVIVSF), 363–383 (LAAAYGIAVTGTMVLTSILST), 396–416 (FVALILIAFLCVDIPLFSANL), and 419–439 (LLSGGWLPLSLGLIMFTIMTT).

It belongs to the HAK/KUP transporter (TC 2.A.72) family.

The protein resides in the cell inner membrane. The catalysed reaction is K(+)(in) + H(+)(in) = K(+)(out) + H(+)(out). Responsible for the low-affinity transport of potassium into the cell. Likely operates as a K(+):H(+) symporter. The chain is Low affinity potassium transport system protein Kup from Salmonella gallinarum (strain 287/91 / NCTC 13346).